The chain runs to 804 residues: Leucine--tRNA ligase (804 aa).

The short motif at 39–50 (PFPSGKGLHVGH) is the 'HIGH' region element. A 'KMSKS' region motif is present at residues 573-577 (KMSKS). K576 is an ATP binding site.

The protein belongs to the class-I aminoacyl-tRNA synthetase family.

The protein resides in the cytoplasm. The enzyme catalyses tRNA(Leu) + L-leucine + ATP = L-leucyl-tRNA(Leu) + AMP + diphosphate. The polypeptide is Leucine--tRNA ligase (Lactobacillus johnsonii (strain CNCM I-12250 / La1 / NCC 533)).